The primary structure comprises 432 residues: Glutamyl-tRNA reductase (432 aa).

Residues 55-58, Ser114, 119-121, and Gln125 contribute to the substrate site; these read TCNR and ETQ. The active-site Nucleophile is Cys56. 194–199 serves as a coordination point for NADP(+); that stretch reads GAGEMI.

This sequence belongs to the glutamyl-tRNA reductase family. As to quaternary structure, homodimer.

It catalyses the reaction (S)-4-amino-5-oxopentanoate + tRNA(Glu) + NADP(+) = L-glutamyl-tRNA(Glu) + NADPH + H(+). It functions in the pathway porphyrin-containing compound metabolism; protoporphyrin-IX biosynthesis; 5-aminolevulinate from L-glutamyl-tRNA(Glu): step 1/2. Functionally, catalyzes the NADPH-dependent reduction of glutamyl-tRNA(Glu) to glutamate 1-semialdehyde (GSA). This Burkholderia pseudomallei (strain 1710b) protein is Glutamyl-tRNA reductase.